The following is a 54-amino-acid chain: U-reduvitoxin-Pr1a (54 aa).

The N-terminal stretch at 1 to 19 (MKLLGLLLLVFTFMALAFA) is a signal peptide. Cystine bridges form between Cys24–Cys39, Cys31–Cys44, and Cys38–Cys51.

It belongs to the venom Ptu1-like knottin family. As to expression, expressed by the venom gland (posterior main gland) (at protein level).

It localises to the secreted. Functionally, binds reversibly and blocks P/Q-type voltage-gated calcium channels (Cav). The sequence is that of U-reduvitoxin-Pr1a from Platymeris rhadamanthus (Red spot assassin bug).